The chain runs to 797 residues: Kinesin-like protein Klp68D (797 aa).

Residues 19 to 344 form the Kinesin motor domain; the sequence is CVQVVVRCRP…LRYASRAKSI (326 aa). Residue 106 to 113 participates in ATP binding; sequence GQTGTGKT. The stretch at 350 to 384 forms a coiled coil; the sequence is KNEDPQDAKLKEYQEEIERLKRLIAPQQQQRSEKQ. Disordered stretches follow at residues 371 to 450, 610 to 656, and 722 to 797; these read RLIA…ELER, SSFP…PSSL, and ANSS…LVNK. Basic residues predominate over residues 386–396; that stretch reads TIKKQRVKKPK. The span at 417-431 shows a compositional bias: acidic residues; the sequence is QVDEDRDSDGDGAES. The segment covering 432–450 has biased composition (basic and acidic residues); the sequence is ESDKENEAEVAKSNEELER. Residues 432-580 are a coiled coil; it reads ESDKENEAEV…LVKELKRQLL (149 aa). Residues 626-638 show a composition bias toward basic residues; that stretch reads GYRRPVSHPQRRR. Low complexity predominate over residues 782–791; sequence KKPASAYPKA.

This sequence belongs to the TRAFAC class myosin-kinesin ATPase superfamily. Kinesin family. Kinesin II subfamily.

It localises to the cytoplasm. The protein resides in the cytoskeleton. Its function is as follows. Plus-end directed microtubule motor that may be used for anterograde axonal transport and could conceivably move cargos in fly neurons different than those moved by kinesin heavy chain or other plus-end directed motors. This is Kinesin-like protein Klp68D from Drosophila pseudoobscura pseudoobscura (Fruit fly).